Reading from the N-terminus, the 254-residue chain is UPF0246 protein FTW_0267 (254 aa).

This sequence belongs to the UPF0246 family.

The protein is UPF0246 protein FTW_0267 of Francisella tularensis subsp. tularensis (strain WY96-3418).